Consider the following 76-residue polypeptide: Small ribosomal subunit protein bS18 (76 aa).

It belongs to the bacterial ribosomal protein bS18 family. In terms of assembly, part of the 30S ribosomal subunit. Forms a tight heterodimer with protein bS6.

Its function is as follows. Binds as a heterodimer with protein bS6 to the central domain of the 16S rRNA, where it helps stabilize the platform of the 30S subunit. This chain is Small ribosomal subunit protein bS18, found in Brevibacillus brevis (strain 47 / JCM 6285 / NBRC 100599).